We begin with the raw amino-acid sequence, 82 residues long: Protein costars (82 aa).

Belongs to the costars family.

Modulates actin dynamics and cell motility. This Dictyostelium discoideum (Social amoeba) protein is Protein costars (cosA).